The primary structure comprises 494 residues: GTPase Der (494 aa).

EngA-type G domains lie at 3-166 (PVVA…AEQM) and 206-379 (IKLA…RSAT). Residues 9 to 16 (GRPNVGKS), 56 to 60 (DTGGI), 118 to 121 (NKVD), 212 to 219 (GRPNVGKS), 259 to 263 (DTAGV), and 324 to 327 (NKWD) contribute to the GTP site. A KH-like domain is found at 380–464 (TRVGTSVLTR…PIRIQFQNSE (85 aa)).

Belongs to the TRAFAC class TrmE-Era-EngA-EngB-Septin-like GTPase superfamily. EngA (Der) GTPase family. As to quaternary structure, associates with the 50S ribosomal subunit.

Functionally, GTPase that plays an essential role in the late steps of ribosome biogenesis. The protein is GTPase Der of Vibrio cholerae serotype O1 (strain ATCC 39541 / Classical Ogawa 395 / O395).